The primary structure comprises 411 residues: G2/mitotic-specific cyclin cig2 (411 aa).

Positions 51-60 match the Destruction box motif; sequence RTVLSDVSNV. Residues 57–89 are disordered; that stretch reads VSNVGKNNADEKDTKKAKRSFDESNLSTNEEAD. Residues 64 to 78 show a composition bias toward basic and acidic residues; the sequence is NADEKDTKKAKRSFD. The Cyclin N-terminal domain occupies 139–265; it reads EIFEYIRKLD…MLNVLNFDLS (127 aa). Residues 181–273 form an interaction with pop1 region; sequence SNFCLMPETL…LSYPSPLNFL (93 aa).

This sequence belongs to the cyclin family. Cyclin AB subfamily. In terms of assembly, associates with cdc2, res2 and rum1. Interacts with pop1 only when phosphorylated. In terms of processing, phosphorylated.

It localises to the nucleus. It is found in the cytoplasm. The protein localises to the cytoskeleton. Its subcellular location is the microtubule organizing center. The protein resides in the spindle pole body. Essential for the control of the cell cycle at the G2/M and G1/S (mitosis) transition. Interacts with the cdc2 protein kinase to form MPF. Interaction with res2 promotes the phosphorylation of res1 and inhibits MBF-dependent gene transcription. Forms an autoregulating feedback-inhibition loop with MBF which is important for normal regulation of the cell cycle. G2/M cyclins accumulate steadily during G2 and are abruptly destroyed at mitosis. Negatively regulates conjugation via interacting with cell cycle 'start' genes. Degraded by skp1, pop1 and pop2 in the G2 and M phases of the cell cycle. This Schizosaccharomyces pombe (strain 972 / ATCC 24843) (Fission yeast) protein is G2/mitotic-specific cyclin cig2 (cig2).